Here is a 409-residue protein sequence, read N- to C-terminus: Transcription termination factor 3, mitochondrial (409 aa).

A mitochondrion-targeting transit peptide spans 1–64; that stretch reads MALLAQQLSR…KTDRALFSWS (64 aa). The interval 74-93 is disordered; sequence RKSSTNSTLLPSVSEQPEKI.

The protein belongs to the mTERF family.

The protein resides in the mitochondrion. Binds promoter DNA and regulates initiation of transcription. Required for normal mitochondrial transcription and translation, and for normal assembly of mitochondrial respiratory complexes. Required for normal mitochondrial function. Maintains 16S rRNA levels and functions in mitochondrial ribosome assembly by regulating the biogenesis of the 39S ribosomal subunit. The protein is Transcription termination factor 3, mitochondrial (Mterf3) of Rattus norvegicus (Rat).